A 182-amino-acid polypeptide reads, in one-letter code: Large ribosomal subunit protein uL5 (182 aa).

The protein belongs to the universal ribosomal protein uL5 family. In terms of assembly, part of the 50S ribosomal subunit; part of the 5S rRNA/L5/L18/L25 subcomplex. Contacts the 5S rRNA and the P site tRNA. Forms a bridge to the 30S subunit in the 70S ribosome.

Functionally, this is one of the proteins that bind and probably mediate the attachment of the 5S RNA into the large ribosomal subunit, where it forms part of the central protuberance. In the 70S ribosome it contacts protein S13 of the 30S subunit (bridge B1b), connecting the 2 subunits; this bridge is implicated in subunit movement. Contacts the P site tRNA; the 5S rRNA and some of its associated proteins might help stabilize positioning of ribosome-bound tRNAs. In Borrelia garinii subsp. bavariensis (strain ATCC BAA-2496 / DSM 23469 / PBi) (Borreliella bavariensis), this protein is Large ribosomal subunit protein uL5.